We begin with the raw amino-acid sequence, 196 residues long: MDQSGSNTNMDIEKESTTFDYSKRSQWLRAAVLGANDGLVSTASLMMGVGAVKHDVKAMILSGFAGMVAGACSMAIGEFVSVYSQYDIEVAQMERDSVEIEKEKLPSPMQAAAASALAFSAGAIVPLLAAAFVKEYKMRIISVVVAVTVALMVFGWLGAALGKAPAVRSSARVLFGGWLAMAVTFGLTKLIGLYGL.

Over M1 to A31 the chain is Cytoplasmic. Residues V32–V52 traverse the membrane as a helical segment. The Vacuolar segment spans residues K53–M59. Residues I60–V80 traverse the membrane as a helical segment. Over S81–A112 the chain is Cytoplasmic. Residues A113–V133 traverse the membrane as a helical segment. The Vacuolar portion of the chain corresponds to K134–R139. The chain crosses the membrane as a helical span at residues I140–A160. Residues L161–R172 are Cytoplasmic-facing. A helical transmembrane segment spans residues V173–L193. The Vacuolar portion of the chain corresponds to Y194–L196.

It belongs to the CCC1 family. Expressed in roots, leaves and inflorescences.

The protein resides in the vacuole membrane. The catalysed reaction is Fe(2+)(in) = Fe(2+)(out). Functionally, vacuolar iron transporter involved in the transfer of iron ions from the cytosol to the vacuole for intracellular iron storage. Involved in regulation of cellular iron homeostasis. Vacuolar iron storage is required for seed embryo and seedling development. In Arabidopsis thaliana (Mouse-ear cress), this protein is Vacuolar iron transporter homolog 2.